A 217-amino-acid chain; its full sequence is Ras-related protein RABA2c (217 aa).

Residues 19 to 27 (GDSGVGKSN), 38 to 44 (CLESKST), 67 to 71 (DTAGQ), 125 to 128 (NKSD), and 155 to 157 (SAL) contribute to the GTP site. The short motif at 41–49 (SKSTIGVEF) is the Effector region element. Residues 195-217 (PGQGTTINVDDTSGGAKRACCSS) are disordered. S-geranylgeranyl cysteine attachment occurs at residues cysteine 214 and cysteine 215.

Belongs to the small GTPase superfamily. Rab family. As to expression, expressed in root tips.

Its subcellular location is the endosome membrane. The protein resides in the golgi apparatus. The protein localises to the trans-Golgi network membrane. Its function is as follows. Intracellular vesicle trafficking and protein transport. This Arabidopsis thaliana (Mouse-ear cress) protein is Ras-related protein RABA2c (RABA2C).